The chain runs to 314 residues: uncharacterized protein (314 aa).

The tract at residues glutamine 39–serine 146 is disordered. The span at serine 56–isoleucine 76 shows a compositional bias: polar residues. Low complexity predominate over residues isoleucine 88–serine 131. A compositionally biased stretch (acidic residues) spans asparagine 132–serine 141.

This is an uncharacterized protein from Acanthamoeba polyphaga mimivirus (APMV).